The following is a 196-amino-acid chain: Ribonuclease HII (196 aa).

Residues 9–196 enclose the RNase H type-2 domain; sequence SLIAGVDEVG…APVKRAIGLK (188 aa). 3 residues coordinate a divalent metal cation: Asp-15, Glu-16, and Asp-107.

Belongs to the RNase HII family. Mn(2+) is required as a cofactor. Requires Mg(2+) as cofactor.

It localises to the cytoplasm. The catalysed reaction is Endonucleolytic cleavage to 5'-phosphomonoester.. Its function is as follows. Endonuclease that specifically degrades the RNA of RNA-DNA hybrids. This is Ribonuclease HII from Photorhabdus laumondii subsp. laumondii (strain DSM 15139 / CIP 105565 / TT01) (Photorhabdus luminescens subsp. laumondii).